The primary structure comprises 364 residues: Transcriptional regulator ICP22 homolog (364 aa).

Disordered regions lie at residues 1–73 (MDRV…HGAR) and 173–364 (VIEG…AAAP). Residues 12 to 46 (VPSPPFSPVDPPGPRPTTPVPGSSPPSPASTPTPP) show a composition bias toward pro residues. 3 stretches are compositionally biased toward acidic residues: residues 181–191 (EECDVDEDDAG), 207–286 (CEDD…DGSD), and 294–343 (DGGD…GEGE). The segment covering 355 to 364 (RAPTRPAAAP) has biased composition (low complexity).

This sequence belongs to the herpesviridae ICP22 family.

The protein is Transcriptional regulator ICP22 homolog (RSP40) of Sus scrofa (Pig).